We begin with the raw amino-acid sequence, 448 residues long: Acetate kinase (448 aa).

Residue N7 coordinates Mg(2+). K14 provides a ligand contact to ATP. R91 is a substrate binding site. D148 functions as the Proton donor/acceptor in the catalytic mechanism. ATP-binding positions include 208 to 212 (HIGNG) and 283 to 285 (DRR). E388 serves as a coordination point for Mg(2+).

This sequence belongs to the acetokinase family. In terms of assembly, homodimer. Mg(2+) is required as a cofactor. The cofactor is Mn(2+).

Its subcellular location is the cytoplasm. It catalyses the reaction acetate + ATP = acetyl phosphate + ADP. It functions in the pathway metabolic intermediate biosynthesis; acetyl-CoA biosynthesis; acetyl-CoA from acetate: step 1/2. Its function is as follows. Catalyzes the formation of acetyl phosphate from acetate and ATP. Can also catalyze the reverse reaction. In Treponema pallidum (strain Nichols), this protein is Acetate kinase.